The primary structure comprises 560 residues: Membrane protein insertase YidC (560 aa).

The chain crosses the membrane as a helical span at residues 1–21 (MDIKRTILIAALAVVSYVMVL). The segment at 42-66 (VAPGLPDGVPAGNNGASADVPSANA) is disordered. The next 5 membrane-spanning stretches (helical) occupy residues 341–361 (LELT…FWLL), 367–387 (LLGN…GLFF), 437–457 (LGGC…YWVL), 468–488 (WMLW…PIIM), and 515–535 (PIIF…YWVV).

This sequence belongs to the OXA1/ALB3/YidC family. Type 1 subfamily. Interacts with the Sec translocase complex via SecD. Specifically interacts with transmembrane segments of nascent integral membrane proteins during membrane integration.

It localises to the cell inner membrane. Its function is as follows. Required for the insertion and/or proper folding and/or complex formation of integral membrane proteins into the membrane. Involved in integration of membrane proteins that insert both dependently and independently of the Sec translocase complex, as well as at least some lipoproteins. Aids folding of multispanning membrane proteins. The protein is Membrane protein insertase YidC of Pseudomonas putida (strain GB-1).